Consider the following 378-residue polypeptide: Chorismate synthase (378 aa).

NADP(+) contacts are provided by R48 and R54. FMN contacts are provided by residues 125 to 127 (RSS), 238 to 239 (NA), G278, 293 to 297 (KPTSS), and R319.

This sequence belongs to the chorismate synthase family. In terms of assembly, homotetramer. FMNH2 is required as a cofactor.

It carries out the reaction 5-O-(1-carboxyvinyl)-3-phosphoshikimate = chorismate + phosphate. The protein operates within metabolic intermediate biosynthesis; chorismate biosynthesis; chorismate from D-erythrose 4-phosphate and phosphoenolpyruvate: step 7/7. Functionally, catalyzes the anti-1,4-elimination of the C-3 phosphate and the C-6 proR hydrogen from 5-enolpyruvylshikimate-3-phosphate (EPSP) to yield chorismate, which is the branch point compound that serves as the starting substrate for the three terminal pathways of aromatic amino acid biosynthesis. This reaction introduces a second double bond into the aromatic ring system. The polypeptide is Chorismate synthase (Azoarcus sp. (strain BH72)).